Reading from the N-terminus, the 66-residue chain is UPF0337 protein M6_Spy1542 (66 aa).

Over residues 1-10 (MSEEKLKAKV) the composition is skewed to basic and acidic residues. A disordered region spans residues 1–22 (MSEEKLKAKVEQASGSLKEGAG).

This sequence belongs to the UPF0337 (CsbD) family.

This chain is UPF0337 protein M6_Spy1542, found in Streptococcus pyogenes serotype M6 (strain ATCC BAA-946 / MGAS10394).